Consider the following 758-residue polypeptide: MSDTQDNAPVSAQGVDQKAAAGCPVAHDSVTAHGSESESPAIDSPSAVGGGRPRTNRDWWPNQLDLSVLSTNSAKVNPLGEDFSYAKEFAKLDVEALKRDITEVLTTSQDWWPADFGHYGGLMIRLSWHAAGTYRIHDGRGGAGDGGQRFAPLNSWPDNVNLDKARRLLWPVKQKYGQKISWADLLVLAGNVALESMGFKTFGFGFGREDVWEPEEIFWGPEDTWLGDERYVSEKEFSAGVGATEMGLIYVNPEGPRGNADPASAAHFIRETFRRMAMNDEETVALIAGGHTFGKTHGAGVADDHVGPEPEGAPLEAQGLGWMSSHASGVGADTISSGLEVTWTDRPTQWSNRFFEILFGYEWELTTSPGGAKQWVAKDAEAIIPDAYDSTKKHKPTMLTTDLSLRVDPAYERISRRFLENPDEFALAFAKAWYKLLHRDMGPVSRFLGPWVPQTQLWQDPVPAVDHELVGAADIAALKAKVLESGLTTTQLVSTAWASAASFRHTDKRGGANGARIRLEPQRSWEVNQPEQLATVLPALEEIQREFNAAGGAKISLADLIVLAGSAAVEKAARDAGVEVTVPFRPGRTDATQEQTDVDSFRVLEPRADAFRNYLRPGEKTQPEVLLVDRAYLLNLTAPEMTVLIGGLRALEANAGGSRHGVLTDRPGVLTNDFFTNLLASGARWKASESTEHAYEIRDVATDKVKWTASAVDLIFGSNSQLRALAEVYASEDAREKFVQDFVAAWTKVMELDRFDLA.

A compositionally biased stretch (polar residues) spans 1 to 10 (MSDTQDNAPV). A disordered region spans residues 1-57 (MSDTQDNAPVSAQGVDQKAAAGCPVAHDSVTAHGSESESPAIDSPSAVGGGRPRTNR). The tryptophyl-tyrosyl-methioninium (Trp-Tyr) (with M-276) cross-link spans 128–250 (WHAAGTYRIH…VGATEMGLIY (123 aa)). The active-site Proton acceptor is histidine 129. Positions 250–276 (YVNPEGPRGNADPASAAHFIRETFRRM) form a cross-link, tryptophyl-tyrosyl-methioninium (Tyr-Met) (with W-128). Residue histidine 291 coordinates heme b.

The protein belongs to the peroxidase family. Peroxidase/catalase subfamily. Homodimer or homotetramer. It depends on heme b as a cofactor. Post-translationally, formation of the three residue Trp-Tyr-Met cross-link is important for the catalase, but not the peroxidase activity of the enzyme.

The enzyme catalyses H2O2 + AH2 = A + 2 H2O. It catalyses the reaction 2 H2O2 = O2 + 2 H2O. In terms of biological role, bifunctional enzyme with both catalase and broad-spectrum peroxidase activity. The sequence is that of Catalase-peroxidase from Salinispora tropica (strain ATCC BAA-916 / DSM 44818 / JCM 13857 / NBRC 105044 / CNB-440).